The sequence spans 183 residues: uncharacterized protein (183 aa).

A Glycyl lysine isopeptide (Lys-Gly) (interchain with G-Cter in ubiquitin) cross-link involves residue Lys21. Disordered stretches follow at residues 24–111 (NTTT…QNDN) and 160–183 (PQSI…TRRP). Residues 99–108 (QQQQQQQQQQ) show a composition bias toward low complexity. Residues 170 to 183 (LPPSNASNTTTRRP) show a composition bias toward polar residues.

The protein localises to the cytoplasm. This is an uncharacterized protein from Saccharomyces cerevisiae (strain ATCC 204508 / S288c) (Baker's yeast).